The sequence spans 284 residues: Nodulation protein O (284 aa).

The segment at Met1 to Asn27 is disordered. 5 Hemolysin-type calcium-binding repeats span residues Lys13–Ile30, Asp31–Ile48, Trp58–Leu75, His94–Leu111, and Val112–Phe129. 4 residues coordinate Ca(2+): Asp100, Asp109, Asp118, and Asp127. Positions Asp208–Asp222 are export signal (aspartic acid box).

The protein resides in the secreted. Its function is as follows. The NodO protein may play a role in nodule development by direct interaction with the root hair cells or some other plant surface in a calcium-dependent manner. The protein is Nodulation protein O (nodO) of Rhizobium leguminosarum bv. viciae.